The chain runs to 214 residues: Large ribosomal subunit protein uL3 (214 aa).

A disordered region spans residues 133–155; it reads ATHGNSRSHRVPGSTGQCQSPGR. An N5-methylglutamine modification is found at Gln151.

It belongs to the universal ribosomal protein uL3 family. Part of the 50S ribosomal subunit. Forms a cluster with proteins L14 and L19. Post-translationally, methylated by PrmB.

In terms of biological role, one of the primary rRNA binding proteins, it binds directly near the 3'-end of the 23S rRNA, where it nucleates assembly of the 50S subunit. This chain is Large ribosomal subunit protein uL3, found in Cellvibrio japonicus (strain Ueda107) (Pseudomonas fluorescens subsp. cellulosa).